We begin with the raw amino-acid sequence, 100 residues long: Urease subunit gamma (100 aa).

The protein belongs to the urease gamma subunit family. Heterotrimer of UreA (gamma), UreB (beta) and UreC (alpha) subunits. Three heterotrimers associate to form the active enzyme.

Its subcellular location is the cytoplasm. The catalysed reaction is urea + 2 H2O + H(+) = hydrogencarbonate + 2 NH4(+). It participates in nitrogen metabolism; urea degradation; CO(2) and NH(3) from urea (urease route): step 1/1. The sequence is that of Urease subunit gamma from Cereibacter sphaeroides (strain ATCC 17029 / ATH 2.4.9) (Rhodobacter sphaeroides).